The primary structure comprises 532 residues: 2,3-bisphosphoglycerate-independent phosphoglycerate mutase (532 aa).

Mn(2+) contacts are provided by D15 and S65. Catalysis depends on S65, which acts as the Phosphoserine intermediate. Residues H126, 156–157 (RD), R188, R194, 258–261 (RPDR), and K331 each bind substrate. Residues D398, H402, D439, H440, and H457 each contribute to the Mn(2+) site.

It belongs to the BPG-independent phosphoglycerate mutase family. Monomer. Requires Mn(2+) as cofactor.

The enzyme catalyses (2R)-2-phosphoglycerate = (2R)-3-phosphoglycerate. It participates in carbohydrate degradation; glycolysis; pyruvate from D-glyceraldehyde 3-phosphate: step 3/5. In terms of biological role, catalyzes the interconversion of 2-phosphoglycerate and 3-phosphoglycerate. In Synechocystis sp. (strain ATCC 27184 / PCC 6803 / Kazusa), this protein is 2,3-bisphosphoglycerate-independent phosphoglycerate mutase.